The chain runs to 384 residues: Alkanesulfonate monooxygenase (384 aa).

This sequence belongs to the SsuD family.

It catalyses the reaction an alkanesulfonate + FMNH2 + O2 = an aldehyde + FMN + sulfite + H2O + 2 H(+). In terms of biological role, catalyzes the desulfonation of aliphatic sulfonates. This is Alkanesulfonate monooxygenase from Burkholderia thailandensis (strain ATCC 700388 / DSM 13276 / CCUG 48851 / CIP 106301 / E264).